Here is a 154-residue protein sequence, read N- to C-terminus: Endoribonuclease YbeY (154 aa).

Zn(2+)-binding residues include H114, H118, and H124.

It belongs to the endoribonuclease YbeY family. It depends on Zn(2+) as a cofactor.

Its subcellular location is the cytoplasm. Its function is as follows. Single strand-specific metallo-endoribonuclease involved in late-stage 70S ribosome quality control and in maturation of the 3' terminus of the 16S rRNA. This is Endoribonuclease YbeY from Haemophilus influenzae (strain ATCC 51907 / DSM 11121 / KW20 / Rd).